We begin with the raw amino-acid sequence, 570 residues long: Spermatocyte protein spe-26 (570 aa).

Kelch repeat units lie at residues 244 to 291 (VLII…IVDG), 293 to 338 (LYLF…SVVY), 341 to 393 (RIYV…VFEN), 395 to 440 (IYVS…NHGN), 442 to 487 (LLIV…SYKG), and 489 to 535 (LFSV…VAPN).

In terms of tissue distribution, testis, in both spermatogonial cells and spermatocytes.

It is found in the cytoplasm. Its subcellular location is the cytoskeleton. Its function is as follows. May play a role in the spermatocyte cytoskeleton, possibly interacting with actin. In Caenorhabditis elegans, this protein is Spermatocyte protein spe-26 (spe-26).